We begin with the raw amino-acid sequence, 211 residues long: LexA repressor (211 aa).

Positions V28 to E48 form a DNA-binding region, H-T-H motif. Residues S132 and K170 each act as for autocatalytic cleavage activity in the active site.

Belongs to the peptidase S24 family. As to quaternary structure, homodimer.

The catalysed reaction is Hydrolysis of Ala-|-Gly bond in repressor LexA.. Represses a number of genes involved in the response to DNA damage (SOS response), including recA and lexA. In the presence of single-stranded DNA, RecA interacts with LexA causing an autocatalytic cleavage which disrupts the DNA-binding part of LexA, leading to derepression of the SOS regulon and eventually DNA repair. The chain is LexA repressor from Leuconostoc citreum (strain KM20).